A 567-amino-acid polypeptide reads, in one-letter code: Malate synthase, glyoxysomal (567 aa).

The Proton acceptor role is filled by Arg-182. Asp-468 (proton donor) is an active-site residue. Residues 565-567 (SRL) carry the Microbody targeting signal motif.

The protein belongs to the malate synthase family.

It is found in the glyoxysome. The catalysed reaction is glyoxylate + acetyl-CoA + H2O = (S)-malate + CoA + H(+). It participates in carbohydrate metabolism; glyoxylate cycle; (S)-malate from isocitrate: step 2/2. This Ricinus communis (Castor bean) protein is Malate synthase, glyoxysomal.